A 425-amino-acid chain; its full sequence is Glycosyl hydrolase family 109 protein 2 (425 aa).

NAD(+) contacts are provided by residues 29-30 (NR), Glu-51, 99-102 (WLTH), 119-120 (EV), and Asn-148. Substrate is bound at residue Tyr-177. NAD(+)-binding positions include 194–198 (FHNHW) and Tyr-211. Substrate is bound by residues 211 to 214 (YPTH) and Tyr-293.

Belongs to the Gfo/Idh/MocA family. Glycosyl hydrolase 109 subfamily. Requires NAD(+) as cofactor.

In terms of biological role, glycosidase. The polypeptide is Glycosyl hydrolase family 109 protein 2 (Bacteroides fragilis (strain YCH46)).